Here is a 486-residue protein sequence, read N- to C-terminus: Protein nucleotidyltransferase YdiU (486 aa).

The ATP site is built by Gly-89, Gly-91, Arg-92, Lys-112, Asp-124, Gly-125, Arg-175, and Arg-182. Asp-251 acts as the Proton acceptor in catalysis. Asn-252 and Asp-261 together coordinate Mg(2+). ATP is bound at residue Asp-261.

Belongs to the SELO family. Requires Mg(2+) as cofactor. Mn(2+) is required as a cofactor.

It carries out the reaction L-seryl-[protein] + ATP = 3-O-(5'-adenylyl)-L-seryl-[protein] + diphosphate. The enzyme catalyses L-threonyl-[protein] + ATP = 3-O-(5'-adenylyl)-L-threonyl-[protein] + diphosphate. It catalyses the reaction L-tyrosyl-[protein] + ATP = O-(5'-adenylyl)-L-tyrosyl-[protein] + diphosphate. The catalysed reaction is L-histidyl-[protein] + UTP = N(tele)-(5'-uridylyl)-L-histidyl-[protein] + diphosphate. It carries out the reaction L-seryl-[protein] + UTP = O-(5'-uridylyl)-L-seryl-[protein] + diphosphate. The enzyme catalyses L-tyrosyl-[protein] + UTP = O-(5'-uridylyl)-L-tyrosyl-[protein] + diphosphate. Nucleotidyltransferase involved in the post-translational modification of proteins. It can catalyze the addition of adenosine monophosphate (AMP) or uridine monophosphate (UMP) to a protein, resulting in modifications known as AMPylation and UMPylation. In Shouchella clausii (strain KSM-K16) (Alkalihalobacillus clausii), this protein is Protein nucleotidyltransferase YdiU.